A 748-amino-acid chain; its full sequence is Catalase-peroxidase 2 (748 aa).

A compositionally biased stretch (polar residues) spans 1 to 24; that stretch reads MSSDTSDSRPPNPDTKTASTSESE. The segment at 1 to 43 is disordered; that stretch reads MSSDTSDSRPPNPDTKTASTSESENPAIPSPKPKSGAPLRNQD. Residues 113–238 constitute a cross-link (tryptophyl-tyrosyl-methioninium (Trp-Tyr) (with M-264)); sequence WHSAGTYRIH…YGATTMGLIY (126 aa). The active-site Proton acceptor is histidine 114. The segment at residues 238–264 is a cross-link (tryptophyl-tyrosyl-methioninium (Tyr-Met) (with W-113)); sequence YVNPEGPEGQPDPLAAAHDIRETFGRM. Residue histidine 279 coordinates heme b.

It belongs to the peroxidase family. Peroxidase/catalase subfamily. In terms of assembly, homotetramer. It depends on heme b as a cofactor. Post-translationally, formation of the three residue Trp-Tyr-Met cross-link is important for the catalase, but not the peroxidase activity of the enzyme.

The enzyme catalyses H2O2 + AH2 = A + 2 H2O. It carries out the reaction 2 H2O2 = O2 + 2 H2O. Functionally, bifunctional enzyme with both catalase and broad-spectrum peroxidase activity. May play a role in the intracellular survival of mycobacteria. This Mycolicibacterium smegmatis (strain ATCC 700084 / mc(2)155) (Mycobacterium smegmatis) protein is Catalase-peroxidase 2.